Here is an 859-residue protein sequence, read N- to C-terminus: Photoactivated adenylate cyclase subunit beta (859 aa).

The BLUF 1 domain maps to 56–149 (LRRLMYLSKS…GRMYGDWHMK (94 aa)). The region spanning 205-333 (VVTFIYLVEF…DCINTTSRIA (129 aa)) is the Guanylate cyclase 1 domain. Residues 420–443 (RPPIFDDTPKGNPRPRTPGYGGRQ) form a disordered region. Positions 471-563 (LTTLTYISQA…RVYPSEWTLT (93 aa)) constitute a BLUF 2 domain. Residues 619–748 (VMLATDICSF…AVSARVMEVE (130 aa)) enclose the Guanylate cyclase 2 domain. The tract at residues 813-859 (AARSGEKPLTEPEEAKPDFRVSPGRVRHGDSGRRSNSAQGKRSIQVR) is disordered. Residues 815 to 831 (RSGEKPLTEPEEAKPDF) show a composition bias toward basic and acidic residues. A compositionally biased stretch (polar residues) spans 846–859 (RSNSAQGKRSIQVR).

It belongs to the adenylyl cyclase class-4/guanylyl cyclase family. In terms of assembly, heterotetramer of two alpha and two beta subunits. FAD serves as cofactor.

It localises to the cell projection. Its subcellular location is the cilium. It is found in the flagellum. It carries out the reaction ATP = 3',5'-cyclic AMP + diphosphate. With respect to regulation, activity increased by up to 80-fold under blue light. Its function is as follows. Acts as a blue light photoreceptor for the step-up photophobic response. Mediates photoavoidance. This is Photoactivated adenylate cyclase subunit beta from Euglena gracilis.